The primary structure comprises 405 residues: Serpin I2 (405 aa).

The signal sequence occupies residues 1–18 (MDTIFLWSLLLLFFGSQA). 3 N-linked (GlcNAc...) asparagine glycosylation sites follow: asparagine 202, asparagine 207, and asparagine 306.

The protein belongs to the serpin family. In terms of tissue distribution, expressed in pancreas and adipose tissues.

The protein localises to the secreted. This chain is Serpin I2 (SERPINI2), found in Homo sapiens (Human).